Here is a 207-residue protein sequence, read N- to C-terminus: Protein GrpE (207 aa).

Positions 1–11 (MTETDGQKDNN) are enriched in basic and acidic residues. The segment at 1–39 (MTETDGQKDNNQDTAQAAADPVVSKPYIMPDDPEEGSNE) is disordered.

Belongs to the GrpE family. In terms of assembly, homodimer.

It localises to the cytoplasm. Participates actively in the response to hyperosmotic and heat shock by preventing the aggregation of stress-denatured proteins, in association with DnaK and GrpE. It is the nucleotide exchange factor for DnaK and may function as a thermosensor. Unfolded proteins bind initially to DnaJ; upon interaction with the DnaJ-bound protein, DnaK hydrolyzes its bound ATP, resulting in the formation of a stable complex. GrpE releases ADP from DnaK; ATP binding to DnaK triggers the release of the substrate protein, thus completing the reaction cycle. Several rounds of ATP-dependent interactions between DnaJ, DnaK and GrpE are required for fully efficient folding. This chain is Protein GrpE, found in Rhodopseudomonas palustris (strain TIE-1).